Here is a 445-residue protein sequence, read N- to C-terminus: Phosphoglucosamine mutase (445 aa).

Serine 102 serves as the catalytic Phosphoserine intermediate. Mg(2+) is bound by residues serine 102, aspartate 241, aspartate 243, and aspartate 245. Residue serine 102 is modified to Phosphoserine.

This sequence belongs to the phosphohexose mutase family. It depends on Mg(2+) as a cofactor. Activated by phosphorylation.

The enzyme catalyses alpha-D-glucosamine 1-phosphate = D-glucosamine 6-phosphate. In terms of biological role, catalyzes the conversion of glucosamine-6-phosphate to glucosamine-1-phosphate. This is Phosphoglucosamine mutase from Aliivibrio fischeri (strain MJ11) (Vibrio fischeri).